A 189-amino-acid polypeptide reads, in one-letter code: UPF0398 protein LGAS_1023 (189 aa).

This sequence belongs to the UPF0398 family.

In Lactobacillus gasseri (strain ATCC 33323 / DSM 20243 / BCRC 14619 / CIP 102991 / JCM 1131 / KCTC 3163 / NCIMB 11718 / NCTC 13722 / AM63), this protein is UPF0398 protein LGAS_1023.